Consider the following 218-residue polypeptide: 3-phospho-D-glycerate guanylyltransferase (218 aa).

It belongs to the CofC family.

It catalyses the reaction (2R)-3-phosphoglycerate + GTP + H(+) = 3-[(R)-glyceryl]-diphospho-5'-guanosine + diphosphate. The protein operates within cofactor biosynthesis; coenzyme F420 biosynthesis. In terms of biological role, guanylyltransferase that catalyzes the activation of (2R)-3-phosphoglycerate (3PG) as 3-[(R)-glyceryl]-diphospho-5'-guanosine, via the condensation of 3PG with GTP. It is involved in the biosynthesis of a derivative of the hydride carrier cofactor coenzyme F420, 3PG-F420. This is 3-phospho-D-glycerate guanylyltransferase from Phenylobacterium zucineum (strain HLK1).